The following is a 225-amino-acid chain: UPF0758 protein Sbal223_0402 (225 aa).

Residues 102-224 (VLTNPDLTRD…IVSFAERGWI (123 aa)) form the MPN domain. The Zn(2+) site is built by H173, H175, and D186. The JAMM motif signature appears at 173 to 186 (HNHPSGIAEPSQAD).

This sequence belongs to the UPF0758 family.

The polypeptide is UPF0758 protein Sbal223_0402 (Shewanella baltica (strain OS223)).